A 348-amino-acid chain; its full sequence is Putative methylesterase 14, chloroplastic (348 aa).

2 disordered regions span residues 1 to 29 (MGNK…MNRS) and 60 to 80 (GSMS…SDPF). The N-terminal 76 residues, 1–76 (MGNKIISMMK…GSTSTRKRTL (76 aa)), are a transit peptide targeting the chloroplast. The residue at position 77 (Ser-77) is a Phosphoserine. Catalysis depends on Ser-172, which acts as the Acyl-ester intermediate. Residues Asp-299 and His-327 each act as charge relay system in the active site.

This sequence belongs to the AB hydrolase superfamily. Methylesterase family.

The protein localises to the plastid. Its subcellular location is the chloroplast. In terms of biological role, putative methylesterase. The chain is Putative methylesterase 14, chloroplastic from Arabidopsis thaliana (Mouse-ear cress).